The sequence spans 276 residues: Anamorsin homolog (276 aa).

The segment at 1–152 is N-terminal SAM-like domain; that stretch reads MEPYVVDNLN…TRGSSIKLPW (152 aa). The interval 152 to 189 is linker; it reads WAHSDIEAAWENVDNETSYDVDKNLINTNSLLQKSDYV. Residues C195, C211, C214, and C216 each contribute to the [2Fe-2S] cluster site. The fe-S binding site A stretch occupies residues 195–216; it reads CGQEFAKNSIGKRKRACKNCTC. The [4Fe-4S] cluster site is built by C237, C240, C248, and C251. 2 short sequence motifs (cx2C motif) span residues 237-240 and 248-251; these read CGNC and CSTC. Positions 237–251 are fe-S binding site B; the sequence is CGNCYLGDAFRCSTC.

Belongs to the anamorsin family. Monomer. It depends on [2Fe-2S] cluster as a cofactor. [4Fe-4S] cluster is required as a cofactor.

It is found in the cytoplasm. Its subcellular location is the mitochondrion intermembrane space. Component of the cytosolic iron-sulfur (Fe-S) protein assembly (CIA) machinery. Required for the maturation of extramitochondrial Fe-S proteins. Part of an electron transfer chain functioning in an early step of cytosolic Fe-S biogenesis, facilitating the de novo assembly of a [4Fe-4S] cluster on the cytosolic Fe-S scaffold complex. Electrons are transferred from NADPH via a FAD- and FMN-containing diflavin oxidoreductase. Together with the diflavin oxidoreductase, also required for the assembly of the diferric tyrosyl radical cofactor of ribonucleotide reductase (RNR), probably by providing electrons for reduction during radical cofactor maturation in the catalytic small subunit. This is Anamorsin homolog from Schistosoma japonicum (Blood fluke).